The sequence spans 177 residues: Large ribosomal subunit protein uL6 (177 aa).

The protein belongs to the universal ribosomal protein uL6 family. In terms of assembly, part of the 50S ribosomal subunit.

In terms of biological role, this protein binds to the 23S rRNA, and is important in its secondary structure. It is located near the subunit interface in the base of the L7/L12 stalk, and near the tRNA binding site of the peptidyltransferase center. This Acinetobacter baylyi (strain ATCC 33305 / BD413 / ADP1) protein is Large ribosomal subunit protein uL6.